Here is a 208-residue protein sequence, read N- to C-terminus: Small ribosomal subunit protein uS4 (208 aa).

Residues 95 to 161 (MRLDALVLRA…VPLQVAAAGA (67 aa)) enclose the S4 RNA-binding domain.

This sequence belongs to the universal ribosomal protein uS4 family. In terms of assembly, part of the 30S ribosomal subunit. Contacts protein S5. The interaction surface between S4 and S5 is involved in control of translational fidelity.

Functionally, one of the primary rRNA binding proteins, it binds directly to 16S rRNA where it nucleates assembly of the body of the 30S subunit. Its function is as follows. With S5 and S12 plays an important role in translational accuracy. This Pseudarthrobacter chlorophenolicus (strain ATCC 700700 / DSM 12829 / CIP 107037 / JCM 12360 / KCTC 9906 / NCIMB 13794 / A6) (Arthrobacter chlorophenolicus) protein is Small ribosomal subunit protein uS4.